We begin with the raw amino-acid sequence, 426 residues long: 3-phosphoshikimate 1-carboxyvinyltransferase (426 aa).

Residues Lys22, Ser23, and Arg27 each contribute to the 3-phosphoshikimate site. Lys22 lines the phosphoenolpyruvate pocket. Phosphoenolpyruvate is bound by residues Gly96 and Arg124. Positions 170, 171, 172, 198, 314, 337, and 341 each coordinate 3-phosphoshikimate. Position 172 (Gln172) interacts with phosphoenolpyruvate. Asp314 serves as the catalytic Proton acceptor. Phosphoenolpyruvate is bound by residues Arg345, Arg387, and Lys412.

It belongs to the EPSP synthase family. As to quaternary structure, monomer.

The protein resides in the cytoplasm. It carries out the reaction 3-phosphoshikimate + phosphoenolpyruvate = 5-O-(1-carboxyvinyl)-3-phosphoshikimate + phosphate. It functions in the pathway metabolic intermediate biosynthesis; chorismate biosynthesis; chorismate from D-erythrose 4-phosphate and phosphoenolpyruvate: step 6/7. Functionally, catalyzes the transfer of the enolpyruvyl moiety of phosphoenolpyruvate (PEP) to the 5-hydroxyl of shikimate-3-phosphate (S3P) to produce enolpyruvyl shikimate-3-phosphate and inorganic phosphate. In Vibrio cholerae serotype O1 (strain ATCC 39541 / Classical Ogawa 395 / O395), this protein is 3-phosphoshikimate 1-carboxyvinyltransferase.